The sequence spans 434 residues: Adenylosuccinate synthetase (434 aa).

Residues 22–28 (GDEGKGK) and 50–52 (GHT) each bind GTP. The Proton acceptor role is filled by aspartate 23. Mg(2+) contacts are provided by aspartate 23 and glycine 50. IMP-binding positions include 23 to 26 (DEGK), 48 to 51 (NAGH), threonine 139, arginine 153, glutamine 234, threonine 249, and arginine 313. Histidine 51 (proton donor) is an active-site residue. 309–315 (ATTGRKR) is a binding site for substrate. Residues arginine 315, 341-343 (KLD), and 423-425 (SVG) each bind GTP.

The protein belongs to the adenylosuccinate synthetase family. Homodimer. It depends on Mg(2+) as a cofactor.

Its subcellular location is the cytoplasm. The enzyme catalyses IMP + L-aspartate + GTP = N(6)-(1,2-dicarboxyethyl)-AMP + GDP + phosphate + 2 H(+). Its pathway is purine metabolism; AMP biosynthesis via de novo pathway; AMP from IMP: step 1/2. Its function is as follows. Plays an important role in the de novo pathway of purine nucleotide biosynthesis. Catalyzes the first committed step in the biosynthesis of AMP from IMP. In Chlorobium phaeovibrioides (strain DSM 265 / 1930) (Prosthecochloris vibrioformis (strain DSM 265)), this protein is Adenylosuccinate synthetase.